The chain runs to 478 residues: Probable cytosolic Fe-S cluster assembly factor AGAP009023 (478 aa).

[4Fe-4S] cluster-binding residues include C23, C69, C72, C75, C189, C245, C396, and C400.

It belongs to the NARF family.

Its function is as follows. Component of the cytosolic iron-sulfur (Fe/S) protein assembly machinery. Required for maturation of extramitochondrial Fe/S proteins. The polypeptide is Probable cytosolic Fe-S cluster assembly factor AGAP009023 (Anopheles gambiae (African malaria mosquito)).